We begin with the raw amino-acid sequence, 154 residues long: Myoglobin-2 (154 aa).

Positions Gly-2–Lys-148 constitute a Globin domain. Nitrite is bound at residue His-65. His-65 is an O2 binding site. His-94 contacts heme b.

Belongs to the globin family. Monomeric.

It localises to the cytoplasm. Its subcellular location is the sarcoplasm. The enzyme catalyses Fe(III)-heme b-[protein] + nitric oxide + H2O = Fe(II)-heme b-[protein] + nitrite + 2 H(+). It carries out the reaction H2O2 + AH2 = A + 2 H2O. In terms of biological role, monomeric heme protein which primary function is to store oxygen and facilitate its diffusion within muscle tissues. Reversibly binds oxygen through a pentacoordinated heme iron and enables its timely and efficient release as needed during periods of heightened demand. Depending on the oxidative conditions of tissues and cells, and in addition to its ability to bind oxygen, it also has a nitrite reductase activity whereby it regulates the production of bioactive nitric oxide. Under stress conditions, like hypoxia and anoxia, it also protects cells against reactive oxygen species thanks to its pseudoperoxidase activity. In Stenella attenuata (Pantropical spotted dolphin), this protein is Myoglobin-2 (MB2).